Consider the following 237-residue polypeptide: Large ribosomal subunit protein uL2 (237 aa).

Polar residues predominate over residues 1-11; sequence MGKRLISQNRG. Disordered stretches follow at residues 1–26 and 204–237; these read MGKR…KRKG and PYGG…SRRT. Basic residues-rich tracts occupy residues 13–26 and 228–237; these read GTPK…KRKG and KVGHIASRRT.

The protein belongs to the universal ribosomal protein uL2 family. As to quaternary structure, part of the 50S ribosomal subunit. Forms a bridge to the 30S subunit in the 70S ribosome.

Its function is as follows. One of the primary rRNA binding proteins. Required for association of the 30S and 50S subunits to form the 70S ribosome, for tRNA binding and peptide bond formation. It has been suggested to have peptidyltransferase activity; this is somewhat controversial. Makes several contacts with the 16S rRNA in the 70S ribosome. This is Large ribosomal subunit protein uL2 from Methanococcus vannielii.